The sequence spans 220 residues: Deep-sea actinoporin Cjtox I (220 aa).

An N-terminal signal peptide occupies residues methionine 1 to alanine 19. Positions leucine 20–lysine 42 are excised as a propeptide. Serine 96, valine 128, serine 146, proline 148, tyrosine 174, tyrosine 178, and tyrosine 179 together coordinate phosphocholine. Residues serine 146–lysine 161 are trp-rich region, which is important for the binding to lipid membrane. Positions lysine 185–asparagine 187 match the Cell attachment site, crucial for protein stability motif.

Belongs to the actinoporin family. Sea anemone subfamily. Octamer or nonamer in membranes. Monomer in the soluble state. In terms of tissue distribution, expressed in tentacles.

It is found in the secreted. Its subcellular location is the nematocyst. The protein resides in the target cell membrane. In terms of biological role, probably acts in predation. Pore-forming protein that forms cations-selective hydrophilic pores of around 1 nm and causes cytolysis. Pore formation is a multi-step process that involves specific recognition of membrane sphingomyelin (but neither cholesterol nor phosphatidylcholine) using aromatic rich region and adjacent phosphocholine (POC) binding site, firm binding to the membrane (mainly driven by hydrophobic interactions) accompanied by the transfer of the N-terminal region to the lipid-water interface and finally pore formation after oligomerization of monomers. Shows hemolytic activity on equine erythrocytes. Hemolysis is moderately inhibited in presence of sphingomyelin, suggesting that this protein targets sphingomyelin. The sequence is that of Deep-sea actinoporin Cjtox I from Cribrinopsis japonica (Deep-sea anemone).